Consider the following 171-residue polypeptide: NADH-quinone oxidoreductase subunit B 1 (171 aa).

Residues Cys44, Cys45, Cys110, and Cys139 each contribute to the [4Fe-4S] cluster site.

The protein belongs to the complex I 20 kDa subunit family. NDH-1 is composed of 14 different subunits. Subunits NuoB, C, D, E, F, and G constitute the peripheral sector of the complex. The cofactor is [4Fe-4S] cluster.

It localises to the cell inner membrane. It catalyses the reaction a quinone + NADH + 5 H(+)(in) = a quinol + NAD(+) + 4 H(+)(out). NDH-1 shuttles electrons from NADH, via FMN and iron-sulfur (Fe-S) centers, to quinones in the respiratory chain. The immediate electron acceptor for the enzyme in this species is believed to be ubiquinone. Couples the redox reaction to proton translocation (for every two electrons transferred, four hydrogen ions are translocated across the cytoplasmic membrane), and thus conserves the redox energy in a proton gradient. The polypeptide is NADH-quinone oxidoreductase subunit B 1 (Opitutus terrae (strain DSM 11246 / JCM 15787 / PB90-1)).